Here is a 346-residue protein sequence, read N- to C-terminus: Methylthioribose-1-phosphate isomerase (346 aa).

Substrate is bound by residues 46 to 48, arginine 89, and glutamine 196; that span reads RGA. Aspartate 237 (proton donor) is an active-site residue. A substrate-binding site is contributed by 247–248; the sequence is NK.

It belongs to the eIF-2B alpha/beta/delta subunits family. MtnA subfamily.

It catalyses the reaction 5-(methylsulfanyl)-alpha-D-ribose 1-phosphate = 5-(methylsulfanyl)-D-ribulose 1-phosphate. It functions in the pathway amino-acid biosynthesis; L-methionine biosynthesis via salvage pathway; L-methionine from S-methyl-5-thio-alpha-D-ribose 1-phosphate: step 1/6. In terms of biological role, catalyzes the interconversion of methylthioribose-1-phosphate (MTR-1-P) into methylthioribulose-1-phosphate (MTRu-1-P). The chain is Methylthioribose-1-phosphate isomerase from Citrifermentans bemidjiense (strain ATCC BAA-1014 / DSM 16622 / JCM 12645 / Bem) (Geobacter bemidjiensis).